Reading from the N-terminus, the 69-residue chain is Large ribosomal subunit protein bL31 (69 aa).

Positions 17, 19, 37, and 40 each coordinate Zn(2+).

The protein belongs to the bacterial ribosomal protein bL31 family. Type A subfamily. Part of the 50S ribosomal subunit. Requires Zn(2+) as cofactor.

In terms of biological role, binds the 23S rRNA. This Caldanaerobacter subterraneus subsp. tengcongensis (strain DSM 15242 / JCM 11007 / NBRC 100824 / MB4) (Thermoanaerobacter tengcongensis) protein is Large ribosomal subunit protein bL31.